The primary structure comprises 732 residues: S-adenosyl-L-methionine-dependent tRNA 4-demethylwyosine synthase TYW1 (732 aa).

Positions 79–237 constitute a Flavodoxin-like domain; that stretch reads VKIFYGSQTG…DFRAWKTKFI (159 aa). FMN is bound by residues 85-89 and 176-208; these read SQTGT and VFGL…HRVM. The tract at residues 248–314 is disordered; sequence RKKSCGGHCK…HQSLNSIVDV (67 aa). Over residues 259 to 286 the composition is skewed to basic and acidic residues; that stretch reads GKCESHQHGSEEREEGSHEQDELHHRDT. Residues 287–301 are compositionally biased toward acidic residues; that stretch reads EEEEPFESSSEEEFG. Positions 400–644 constitute a Radical SAM core domain; it reads YGIESHRCME…VDLIPEYEIA (245 aa). [4Fe-4S] cluster contacts are provided by Cys-416, Cys-420, and Cys-423.

It belongs to the TYW1 family. [4Fe-4S] cluster is required as a cofactor.

It carries out the reaction N(1)-methylguanosine(37) in tRNA(Phe) + pyruvate + S-adenosyl-L-methionine = 4-demethylwyosine(37) in tRNA(Phe) + 5'-deoxyadenosine + L-methionine + CO2 + H2O. It participates in tRNA modification; wybutosine-tRNA(Phe) biosynthesis. Its function is as follows. Probable component of the wybutosine biosynthesis pathway. Wybutosine is a hyper modified guanosine with a tricyclic base found at the 3'-position adjacent to the anticodon of eukaryotic phenylalanine tRNA. Catalyzes the condensation of N-methylguanine with 2 carbon atoms from pyruvate to form the tricyclic 4-demethylwyosine, an intermediate in wybutosine biosynthesis. The protein is S-adenosyl-L-methionine-dependent tRNA 4-demethylwyosine synthase TYW1 (TYW1) of Homo sapiens (Human).